Reading from the N-terminus, the 78-residue chain is Acyl carrier protein (78 aa).

The 76-residue stretch at 2–77 (DNIVERVKKI…QAVDYILAGK (76 aa)) folds into the Carrier domain. At serine 37 the chain carries O-(pantetheine 4'-phosphoryl)serine.

The protein belongs to the acyl carrier protein (ACP) family. Post-translationally, 4'-phosphopantetheine is transferred from CoA to a specific serine of apo-ACP by AcpS. This modification is essential for activity because fatty acids are bound in thioester linkage to the sulfhydryl of the prosthetic group.

It localises to the cytoplasm. Its pathway is lipid metabolism; fatty acid biosynthesis. Carrier of the growing fatty acid chain in fatty acid biosynthesis. The chain is Acyl carrier protein from Dechloromonas aromatica (strain RCB).